The following is a 46-amino-acid chain: Protein krueppel (46 aa).

3 C2H2-type zinc fingers span residues 1-4 (MRLH), 10-32 (YHCTHCERQFVQVANLRRHLRVH), and 38-46 (YACELCTSK).

It belongs to the krueppel C2H2-type zinc-finger protein family.

The protein localises to the nucleus. Its function is as follows. Krueppel is a gap class segmentation protein. This is Protein krueppel (Kr) from Lithobius forficatus (Centipede).